The chain runs to 507 residues: Arabinose import ATP-binding protein AraG (507 aa).

ABC transporter domains follow at residues 14–249 (LRFN…MVGR) and 249–505 (RDIQ…LPRT). 46–53 (GENGAGKS) serves as a coordination point for ATP.

This sequence belongs to the ABC transporter superfamily. Arabinose importer (TC 3.A.1.2.2) family. In terms of assembly, the complex is composed of two ATP-binding proteins (AraG), two transmembrane proteins (AraH) and a solute-binding protein (AraF).

Its subcellular location is the cell inner membrane. It catalyses the reaction L-arabinose(out) + ATP + H2O = L-arabinose(in) + ADP + phosphate + H(+). Its function is as follows. Part of the ABC transporter complex AraFGH involved in arabinose import. Responsible for energy coupling to the transport system. The polypeptide is Arabinose import ATP-binding protein AraG (Pseudomonas savastanoi pv. phaseolicola (strain 1448A / Race 6) (Pseudomonas syringae pv. phaseolicola (strain 1448A / Race 6))).